The following is a 571-amino-acid chain: Acetolactate synthase large subunit (571 aa).

Residue glutamate 51 coordinates thiamine diphosphate. Residues arginine 153, 261–282 (HGTYEANMAMHYSDVIFAIGVR), and 304–323 (DIDPTSISKTVSADIPIVGD) each bind FAD. A thiamine pyrophosphate binding region spans residues 394 to 474 (QHQMFTALYY…VLILNLNNSS (81 aa)). Positions 445 and 472 each coordinate Mg(2+).

Belongs to the TPP enzyme family. In terms of assembly, dimer of large and small chains. Mg(2+) serves as cofactor. It depends on thiamine diphosphate as a cofactor.

It carries out the reaction 2 pyruvate + H(+) = (2S)-2-acetolactate + CO2. Its pathway is amino-acid biosynthesis; L-isoleucine biosynthesis; L-isoleucine from 2-oxobutanoate: step 1/4. It functions in the pathway amino-acid biosynthesis; L-valine biosynthesis; L-valine from pyruvate: step 1/4. This chain is Acetolactate synthase large subunit (ilvI), found in Buchnera aphidicola subsp. Schizaphis graminum (strain Sg).